A 310-amino-acid polypeptide reads, in one-letter code: MVKVYAPASSANMSVGFDVLGAAVTPVDGALLGDVVTVEAAETFSLNNLGRFADKLPSEPRENIVYQCWERFCQELGKQIPVAMALEKNMPIGSGLGSSACSVVAALMAMNEHCGKPLNDTRLLALMGELEGRISGSIHYDNVAPCFLGGMQLMIEENDIISQQVPGFDEWLWVLAYPGIKVSTAEARAILPAQYRRQDCIAHGRHLAGFIHACYSRQPELAAKLMKDVIAEPYRERLLPGFRQARQAVAEIGAVASGISGSGPTLFALCDKPDTAQRVADWLGKNYLQNQEGFVHICRLDTAGARVLEN.

P91–C101 contributes to the ATP binding site.

Belongs to the GHMP kinase family. Homoserine kinase subfamily.

The protein resides in the cytoplasm. It carries out the reaction L-homoserine + ATP = O-phospho-L-homoserine + ADP + H(+). Its pathway is amino-acid biosynthesis; L-threonine biosynthesis; L-threonine from L-aspartate: step 4/5. In terms of biological role, catalyzes the ATP-dependent phosphorylation of L-homoserine to L-homoserine phosphate. The protein is Homoserine kinase of Escherichia coli O17:K52:H18 (strain UMN026 / ExPEC).